A 968-amino-acid chain; its full sequence is uncharacterized protein (968 aa).

Residues 12–32 (LIFIFSLFFLILFFLESSIGF) traverse the membrane as a helical segment.

This sequence to E.coli YtfN.

It is found in the membrane. This is an uncharacterized protein from Buchnera aphidicola subsp. Schizaphis graminum (strain Sg).